The primary structure comprises 540 residues: Chaperonin GroEL (540 aa).

Residues 30–33 (TLGP), lysine 51, 87–91 (DGTTT), glycine 415, 479–481 (NAA), and aspartate 495 each bind ATP.

This sequence belongs to the chaperonin (HSP60) family. As to quaternary structure, forms a cylinder of 14 subunits composed of two heptameric rings stacked back-to-back. Interacts with the co-chaperonin GroES.

The protein resides in the cytoplasm. It carries out the reaction ATP + H2O + a folded polypeptide = ADP + phosphate + an unfolded polypeptide.. Together with its co-chaperonin GroES, plays an essential role in assisting protein folding. The GroEL-GroES system forms a nano-cage that allows encapsulation of the non-native substrate proteins and provides a physical environment optimized to promote and accelerate protein folding. This chain is Chaperonin GroEL, found in Raoultella ornithinolytica (Klebsiella ornithinolytica).